We begin with the raw amino-acid sequence, 657 residues long: Protein kinase and PP2C-like domain-containing protein (657 aa).

In terms of domain architecture, Protein kinase spans 32 to 327 (FSLLSPIAKG…LKIIEKHIAV (296 aa)). ATP is bound by residues 38-46 (IAKGSESTV) and lysine 59. The Proton acceptor; for kinase activity role is filled by aspartate 156. The region spanning 390 to 647 (SWGSFATCGR…DNITVIVVFL (258 aa)) is the PPM-type phosphatase domain. Mn(2+)-binding residues include aspartate 426, glycine 427, aspartate 598, and aspartate 638.

It in the N-terminal section; belongs to the protein kinase superfamily. Ser/Thr protein kinase family. This sequence in the C-terminal section; belongs to the PP2C family. The cofactor is Mg(2+). Mn(2+) is required as a cofactor.

It catalyses the reaction L-seryl-[protein] + ATP = O-phospho-L-seryl-[protein] + ADP + H(+). The enzyme catalyses L-threonyl-[protein] + ATP = O-phospho-L-threonyl-[protein] + ADP + H(+). The catalysed reaction is O-phospho-L-seryl-[protein] + H2O = L-seryl-[protein] + phosphate. It carries out the reaction O-phospho-L-threonyl-[protein] + H2O = L-threonyl-[protein] + phosphate. The protein is Protein kinase and PP2C-like domain-containing protein of Oryza sativa subsp. japonica (Rice).